Consider the following 478-residue polypeptide: MYRVAKASEYLVITGAGIDDVKLEKKAWIFPGQSCTVFDLSPVNYTFEVQAMSAEKLPFVLPAVFTIGPRVDDYESLLKYAKLISPHDKLSNHVNELVQGIIEGETRVLVASMTMEEVFRGTKEFKQEVFDKVQLELNQFGLWIYNANVKQLVDVPGHEYFSYLGQKTQMEAANQARVDVAEAKMKGEIGSKLREGQTIQNAAKIDAETKVIAMQRAGEGEKQGIKVRTEVKVFENQREAEVAEANSELAKKKAAWTMAAQVAELEAAKAVALREAELQGEVERMNALTTTEKLKADFLSKASVEYDTKVQEANWELYKKQKEAEAILYEKKAEAEAQKALADSTFYARKQEAEAELYAKKKEAEGIMTLGNAQGAYVSTLLNALGNNYTAVRDYLMINGGMFQEIAKINAEAVRGLEPKISIWTNGGDNNGGITEGAMGMKEVAGVYKMLPPLFKTVHEQTGMFPPAWMGSLPDKNS.

The S-palmitoyl cysteine moiety is linked to residue Cys35. Residues Glu235–Glu277 are a coiled coil.

Belongs to the band 7/mec-2 family. Flotillin subfamily. May be palmitoylated. In terms of tissue distribution, expressed in all plant organs. Primarily expressed in vascular tissues. No change in spatial expression in root upon inoculation. Expression limited to the nodule vascular tissue.

It is found in the cell membrane. Its subcellular location is the membrane. The protein resides in the caveola. In terms of biological role, may act as a scaffolding protein within caveolar membranes, functionally participating in formation of caveolae or caveolae-like vesicles. May be involved in nodule formation. This is Flotillin-like protein 1 (FLOT1) from Medicago truncatula (Barrel medic).